Consider the following 250-residue polypeptide: Indole-3-glycerol phosphate synthase (250 aa).

It belongs to the TrpC family.

It catalyses the reaction 1-(2-carboxyphenylamino)-1-deoxy-D-ribulose 5-phosphate + H(+) = (1S,2R)-1-C-(indol-3-yl)glycerol 3-phosphate + CO2 + H2O. It participates in amino-acid biosynthesis; L-tryptophan biosynthesis; L-tryptophan from chorismate: step 4/5. This Metallosphaera sedula (strain ATCC 51363 / DSM 5348 / JCM 9185 / NBRC 15509 / TH2) protein is Indole-3-glycerol phosphate synthase.